The primary structure comprises 318 residues: Malate dehydrogenase (318 aa).

Residues 10–15 (GAGNIG) and Asp-34 each bind NAD(+). Arg-83 and Arg-89 together coordinate substrate. NAD(+)-binding positions include Asn-96 and 119–121 (ITN). 2 residues coordinate substrate: Asn-121 and Arg-152. The active-site Proton acceptor is the His-176.

This sequence belongs to the LDH/MDH superfamily. MDH type 3 family.

It carries out the reaction (S)-malate + NAD(+) = oxaloacetate + NADH + H(+). Its function is as follows. Catalyzes the reversible oxidation of malate to oxaloacetate. This is Malate dehydrogenase from Rhodospirillum rubrum (strain ATCC 11170 / ATH 1.1.1 / DSM 467 / LMG 4362 / NCIMB 8255 / S1).